Here is a 166-residue protein sequence, read N- to C-terminus: Vasopressin-neurophysin 2-copeptin (166 aa).

A signal peptide spans 1-19 (MPDATLPACFLSLLAFTSA). A disulfide bond links Cys20 and Cys25. Gly28 carries the glycine amide modification. 7 cysteine pairs are disulfide-bonded: Cys41/Cys85, Cys44/Cys58, Cys52/Cys75, Cys59/Cys65, Cys92/Cys104, Cys98/Cys116, and Cys105/Cys110. Asn133 carries an N-linked (GlcNAc...) asparagine glycan.

It belongs to the vasopressin/oxytocin family. As to quaternary structure, interacts with vasopressin receptors V1bR/AVPR1B (Ki=85 pM), V1aR/AVPR1A (Ki=0.6 nM) and V2R/AVPR2 (Ki=4.9 nM). Interacts with oxytocin receptor (OXTR) (Ki=110 nM).

It is found in the secreted. In terms of biological role, neurophysin 2 specifically binds vasopressin. Functionally, vasopressin has a direct antidiuretic action on the kidney, it also causes vasoconstriction of the peripheral vessels. Acts by binding to vasopressin receptors (V1bR/AVPR1B, V1aR/AVPR1A, and V2R/AVPR2). This is Vasopressin-neurophysin 2-copeptin (AVP) from Bos taurus (Bovine).